Consider the following 190-residue polypeptide: Peptidyl-tRNA hydrolase (190 aa).

TRNA is bound at residue Tyr-18. His-23 serves as the catalytic Proton acceptor. Residues Tyr-69, Asn-71, and Asn-117 each contribute to the tRNA site.

This sequence belongs to the PTH family. As to quaternary structure, monomer.

It is found in the cytoplasm. It catalyses the reaction an N-acyl-L-alpha-aminoacyl-tRNA + H2O = an N-acyl-L-amino acid + a tRNA + H(+). In terms of biological role, hydrolyzes ribosome-free peptidyl-tRNAs (with 1 or more amino acids incorporated), which drop off the ribosome during protein synthesis, or as a result of ribosome stalling. Catalyzes the release of premature peptidyl moieties from peptidyl-tRNA molecules trapped in stalled 50S ribosomal subunits, and thus maintains levels of free tRNAs and 50S ribosomes. In Rhodococcus erythropolis (strain PR4 / NBRC 100887), this protein is Peptidyl-tRNA hydrolase.